Reading from the N-terminus, the 616-residue chain is Protein NRT1/ PTR FAMILY 2.11 (616 aa).

The disordered stretch occupies residues 1–22 (MERKPLELESTDNHQNPSSAVY). 12 helical membrane passes run 59-79 (FEKL…TAVF), 87-107 (ATII…AAFL), 118-138 (LSVA…TAAV), 159-179 (GGQI…AGGI), 205-225 (FFNW…TLVV), 233-253 (WTIG…IFFA), 349-369 (VKCI…YLTI), 392-412 (FVIP…VFIV), 435-455 (LQRI…AGFV), 483-503 (AMWL…AAIG), 519-539 (FAGS…SFLI), and 566-586 (LFYF…LVMS).

It belongs to the major facilitator superfamily. Proton-dependent oligopeptide transporter (POT/PTR) (TC 2.A.17) family. In terms of tissue distribution, expressed in roots. Detected in shoots, stems and flowers. Expressed in veins and in the root vasculature with highest expression in lateral branching points.

The protein resides in the cell membrane. Functionally, high-affinity, proton-dependent glucosinolate-specific transporter. Involved in apoplasmic phloem-loading of glucosinolates and in bidirectional long-distance transport of aliphatic but not indole glucosinolates. May be involved in removal of glucosinolates from the xylem in roots. This chain is Protein NRT1/ PTR FAMILY 2.11 (NPF2.11), found in Arabidopsis thaliana (Mouse-ear cress).